A 112-amino-acid polypeptide reads, in one-letter code: Large ribosomal subunit protein P2 (112 aa).

Residues 69 to 85 (AGGAAMPAAAAGGAPAA) show a composition bias toward low complexity. The disordered stretch occupies residues 69 to 112 (AGGAAMPAAAAGGAPAAAEDKAEAKKPEAEPEEEEDDMGFSLFD). A compositionally biased stretch (basic and acidic residues) spans 86–97 (AEDKAEAKKPEA).

Belongs to the eukaryotic ribosomal protein P1/P2 family. As to quaternary structure, P1 and P2 exist as dimers at the large ribosomal subunit. In terms of processing, phosphorylated.

Its function is as follows. Plays an important role in the elongation step of protein synthesis. The polypeptide is Large ribosomal subunit protein P2 (Babesia bovis).